The sequence spans 757 residues: Transcription factor FBD3 (757 aa).

Residues 1–24 (MSSKRLSQNEQEKSPGTGPPTHKR) are disordered. The segment at residues 31–58 (CNACRMRKSRCDGHRPSCSSCLSLGVNC) is a DNA-binding region (zn(2)-C6 fungal-type). 2 disordered regions span residues 106–161 (GGTD…DANT) and 202–222 (VAPS…TDVP). Over residues 111–120 (NNHHNNHDSP) the composition is skewed to basic and acidic residues. Residues 125 to 135 (TIAQSITSSRP) are compositionally biased toward polar residues.

It is found in the nucleus. Transcription factor; part of the Fusarium detoxification of benzoxazolinone cluster involved in the degradation of benzoxazolinones produced by the host plant. Maize, wheat, and rye produce the 2 benzoxazinone phytoanticipins 2,4-dihy-droxy-7-methoxy-1,4-benzoxazin-3-one (DIMBOA) and 2,4-dihydroxy-1,4-benzoxazin-3-one (DIBOA) that, due to their inherent instability once released, spontaneously degrade to the more stable corresponding benzoxazolinones, 6-methoxy-2-benzoxazolinone (MBOA) and 2-benzoxazolinone (BOA), respectively. FDB3 controls the transcription of the FDB gene cluster in response to 6-methoxy-2-benzoxazolinone (MBOA). In Fusarium pseudograminearum (strain CS3096) (Wheat and barley crown-rot fungus), this protein is Transcription factor FBD3.